The following is a 406-amino-acid chain: Solute carrier family 22 member 18 (406 aa).

A run of 10 helical transmembrane segments spans residues Gly8–Phe28, Val43–Phe63, Ala85–Phe105, Leu140–Thr160, Ala168–Ala188, Phe226–Ile246, Ala258–Gly278, Leu295–Phe315, Leu316–Thr336, and Gly374–Trp394.

Belongs to the major facilitator (TC 2.A.1) superfamily. Organic cation transporter (TC 2.A.1.19) family. In terms of assembly, interacts with RNF167. In terms of tissue distribution, expressed at high levels in fetal and adult kidney and liver, and extraembryonic membranes (yolk sac). Expressed at moderate levels in intestine, heart, lung and testis.

Its subcellular location is the apical cell membrane. Functionally, may act as a transporter of organic cations based on a proton efflux antiport mechanism. May play a role in the transport of chloroquine and quinidine-related compounds in kidney. Plays a role in the regulation of lipid metabolism. This is Solute carrier family 22 member 18 (Slc67a1) from Mus musculus (Mouse).